Reading from the N-terminus, the 373-residue chain is Protein-glutamate methylesterase/protein-glutamine glutaminase 1 (373 aa).

The region spanning 16–133 (RVVVVDDSAL…ASGLTELSDQ (118 aa)) is the Response regulatory domain. At Asp-67 the chain carries 4-aspartylphosphate. A CheB-type methylesterase domain is found at 175–367 (RVSTEKLICI…PALIAKLSSA (193 aa)). Active-site residues include Ser-187, His-213, and Asp-309.

Belongs to the CheB family. Post-translationally, phosphorylated by CheA. Phosphorylation of the N-terminal regulatory domain activates the methylesterase activity.

The protein resides in the cytoplasm. It catalyses the reaction [protein]-L-glutamate 5-O-methyl ester + H2O = L-glutamyl-[protein] + methanol + H(+). It carries out the reaction L-glutaminyl-[protein] + H2O = L-glutamyl-[protein] + NH4(+). Functionally, involved in chemotaxis. Part of a chemotaxis signal transduction system that modulates chemotaxis in response to various stimuli. Catalyzes the demethylation of specific methylglutamate residues introduced into the chemoreceptors (methyl-accepting chemotaxis proteins or MCP) by CheR. Also mediates the irreversible deamidation of specific glutamine residues to glutamic acid. The sequence is that of Protein-glutamate methylesterase/protein-glutamine glutaminase 1 from Albidiferax ferrireducens (strain ATCC BAA-621 / DSM 15236 / T118) (Rhodoferax ferrireducens).